A 185-amino-acid polypeptide reads, in one-letter code: MPRLFLFHLLGVCLLLNQFSRAVAAKWMDDVIKACGRELVRAQIAICGKSTLGKRSLNQEDAPLKPRPAAEIVPSLINQDTETINMMSEFVANLPQELKLTLSERQPALSELQQHVPVLKDSNLSFEEFKKIIRKRQSEATDSSPSELRSLGLDTHSRRKRQLYMTLSNKCCHIGCTKKSLAKFC.

The first 24 residues, 1–24, serve as a signal peptide directing secretion; that stretch reads MPRLFLFHLLGVCLLLNQFSRAVA. Disulfide bonds link Cys-35–Cys-172, Cys-47–Cys-185, and Cys-171–Cys-176. Positions 56 to 157 are cleaved as a propeptide — connecting peptide; sequence SLNQEDAPLK…LRSLGLDTHS (102 aa).

It belongs to the insulin family. Heterodimer of a B chain and an A chain linked by two disulfide bonds.

It localises to the secreted. Its function is as follows. Relaxin is an ovarian hormone that acts with estrogen to produce dilatation of the birth canal in many mammals. May be involved in remodeling of connective tissues during pregnancy, promoting growth of pubic ligaments and ripening of the cervix. The protein is Prorelaxin (RLN) of Macaca mulatta (Rhesus macaque).